A 178-amino-acid chain; its full sequence is MPAYHSTFPVDPNTDRMVGNFALLPLNTKFRGPAYPSNSDYDIIDECLDLFRANSFFKNFEIKSPADRVLIYGILFINDCLAHLKITTSFNEAVKVLTNVALDNFTLPGTPGFPLNNVYQVPVQDHNSMDLLKTYIQQFRQELAMRLLERVYSSTDSKEYPSKFWLAFTRRRFMNKSL.

A Glycyl lysine isopeptide (Lys-Gly) (interchain with G-Cter in ubiquitin) cross-link involves residue Lys29.

It belongs to the ARPC3 family. As to quaternary structure, component of the Arp2/3 complex composed of ARP2, ARP3, ARC40/p41-ARC, ARC35/p34-ARC, ARC18/p21-ARC, ARC19/p20-ARC and ARC16/p16-ARC.

It is found in the cytoplasm. The protein localises to the cytoskeleton. Functionally, functions as a component of the Arp2/3 complex which is involved in regulation of actin polymerization and together with an activating nucleation-promoting factor (NPF) mediates the formation of branched actin networks. The protein is Actin-related protein 2/3 complex subunit 3 (ARC18) of Saccharomyces cerevisiae (strain ATCC 204508 / S288c) (Baker's yeast).